Consider the following 137-residue polypeptide: Small ribosomal subunit protein uS12 (137 aa).

At Asp89 the chain carries 3-methylthioaspartic acid. Positions 105 to 137 are disordered; that stretch reads AGVAGRTQRRSKYGAKRPKAGQAAAPAKGKGKK. Residues 111 to 123 show a composition bias toward basic residues; it reads TQRRSKYGAKRPK. Low complexity predominate over residues 124–137; that stretch reads AGQAAAPAKGKGKK.

The protein belongs to the universal ribosomal protein uS12 family. In terms of assembly, part of the 30S ribosomal subunit. Contacts proteins S8 and S17. May interact with IF1 in the 30S initiation complex.

With S4 and S5 plays an important role in translational accuracy. In terms of biological role, interacts with and stabilizes bases of the 16S rRNA that are involved in tRNA selection in the A site and with the mRNA backbone. Located at the interface of the 30S and 50S subunits, it traverses the body of the 30S subunit contacting proteins on the other side and probably holding the rRNA structure together. The combined cluster of proteins S8, S12 and S17 appears to hold together the shoulder and platform of the 30S subunit. The polypeptide is Small ribosomal subunit protein uS12 (Phocaeicola vulgatus (strain ATCC 8482 / DSM 1447 / JCM 5826 / CCUG 4940 / NBRC 14291 / NCTC 11154) (Bacteroides vulgatus)).